The primary structure comprises 86 residues: Weak neurotoxin 10 (86 aa).

The signal sequence occupies residues 1–21 (MKTLLLTLVVVTIVCLDLGYT). Cystine bridges form between Cys24-Cys45, Cys27-Cys32, Cys38-Cys63, Cys67-Cys78, and Cys79-Cys84.

The protein belongs to the three-finger toxin family. Ancestral subfamily. Orphan group II sub-subfamily. As to expression, expressed by the venom gland.

The protein resides in the secreted. Binds with low affinity to muscular (alpha-1-beta-1-delta-epsilon/CHRNA1-CHRNB1-CHRND-CHRNE) and very low affinity to neuronal (alpha-7/CHRNA7) nicotinic acetylcholine receptor (nAChR). The polypeptide is Weak neurotoxin 10 (WNTX10) (Naja sputatrix (Malayan spitting cobra)).